Here is a 104-residue protein sequence, read N- to C-terminus: Large ribosomal subunit protein bL21 (104 aa).

It belongs to the bacterial ribosomal protein bL21 family. As to quaternary structure, part of the 50S ribosomal subunit. Contacts protein L20.

Its function is as follows. This protein binds to 23S rRNA in the presence of protein L20. The protein is Large ribosomal subunit protein bL21 of Granulibacter bethesdensis (strain ATCC BAA-1260 / CGDNIH1).